A 296-amino-acid polypeptide reads, in one-letter code: Arginase (296 aa).

Mn(2+) is bound by residues His-97, Asp-120, His-122, and Asp-124. Residues 122-126 (HGDLN), 133-135 (SGN), and Asp-176 each bind substrate. Residues Asp-223 and Asp-225 each contribute to the Mn(2+) site. Substrate is bound by residues Thr-237 and Glu-268.

It belongs to the arginase family. Requires Mn(2+) as cofactor.

The catalysed reaction is L-arginine + H2O = urea + L-ornithine. The protein operates within nitrogen metabolism; urea cycle; L-ornithine and urea from L-arginine: step 1/1. In terms of biological role, involved in the catabolism of arginine. In Bacillus subtilis (strain 168), this protein is Arginase.